We begin with the raw amino-acid sequence, 68 residues long: U-poneritoxin(01)-Om4b (68 aa).

The first 25 residues, 1 to 25 (MKPSGLTLAFLVVFMMAIMYNSVQA), serve as a signal peptide directing secretion. The propeptide occupies 26–39 (EALADADAEAFAEA).

This sequence belongs to the formicidae venom precursor-01 superfamily. In terms of assembly, homo- or heterodimer with PLP4 (AC A0A348G5W0); disulfide-linked. Truncated sequences of this peptide have also been found in the venom. It is possible they have been cleaved in the venom. Expressed by the venom gland.

It localises to the secreted. Functionally, this homodimer composed of two cationic amphipathic alpha-helical peptides has antimicrobial activities against E.coli, S.aureus (MIC=3.1 uM), and S.cerevisiae (MIC=3.1 uM). It also shows histamine-releasing activity (66.4% at 10 uM) and a weak hemolytic activity (10.5% at 50 uM). This chain is U-poneritoxin(01)-Om4b, found in Odontomachus monticola (Trap-jaw ant).